Reading from the N-terminus, the 122-residue chain is Replication factor A protein 3 (122 aa).

The protein belongs to the replication factor A protein 3 family. Component of the heterotrimeric canonical replication protein A complex (RPA). In terms of processing, the N-terminus is blocked.

The protein localises to the nucleus. As part of the replication protein A (RPA/RP-A), a single-stranded DNA-binding heterotrimeric complex, may play an essential role in DNA replication, recombination and repair. Binds and stabilizes single-stranded DNA intermediates, preventing complementary DNA reannealing and recruiting different proteins involved in DNA metabolism. Stimulates the activity of a cognate strand exchange protein (SEP1). The sequence is that of Replication factor A protein 3 (RFA3) from Saccharomyces cerevisiae (strain ATCC 204508 / S288c) (Baker's yeast).